Here is a 146-residue protein sequence, read N- to C-terminus: Acireductone dioxygenase (146 aa).

Fe(2+)-binding residues include His-71, His-73, Glu-77, and His-116. 4 residues coordinate Ni(2+): His-71, His-73, Glu-77, and His-116.

This sequence belongs to the acireductone dioxygenase (ARD) family. Fe(2+) serves as cofactor. It depends on Ni(2+) as a cofactor.

It is found in the cytoplasm. Its subcellular location is the nucleus. The catalysed reaction is 1,2-dihydroxy-5-(methylsulfanyl)pent-1-en-3-one + O2 = 4-methylsulfanyl-2-oxobutanoate + formate + 2 H(+). The enzyme catalyses 1,2-dihydroxy-5-(methylsulfanyl)pent-1-en-3-one + O2 = 3-(methylsulfanyl)propanoate + CO + formate + 2 H(+). It functions in the pathway amino-acid biosynthesis; L-methionine biosynthesis via salvage pathway; L-methionine from S-methyl-5-thio-alpha-D-ribose 1-phosphate: step 5/6. Functionally, catalyzes 2 different reactions between oxygen and the acireductone 1,2-dihydroxy-3-keto-5-methylthiopentene (DHK-MTPene) depending upon the metal bound in the active site. Fe-containing acireductone dioxygenase (Fe-ARD) produces formate and 2-keto-4-methylthiobutyrate (KMTB), the alpha-ketoacid precursor of methionine in the methionine recycle pathway. Ni-containing acireductone dioxygenase (Ni-ARD) produces methylthiopropionate, carbon monoxide and formate, and does not lie on the methionine recycle pathway. In Heterostelium pallidum (strain ATCC 26659 / Pp 5 / PN500) (Cellular slime mold), this protein is Acireductone dioxygenase.